A 370-amino-acid polypeptide reads, in one-letter code: Probable pectin lyase E (370 aa).

Residues C75 and C96 are joined by a disulfide bond. R245 is a catalytic residue. An N-linked (GlcNAc...) asparagine glycan is attached at N307. C311 and C319 form a disulfide bridge.

It belongs to the polysaccharide lyase 1 family.

The protein resides in the secreted. It catalyses the reaction Eliminative cleavage of (1-&gt;4)-alpha-D-galacturonan methyl ester to give oligosaccharides with 4-deoxy-6-O-methyl-alpha-D-galact-4-enuronosyl groups at their non-reducing ends.. Its function is as follows. Pectinolytic enzymes consist of four classes of enzymes: pectin lyase, polygalacturonase, pectin methylesterase and rhamnogalacturonase. Among pectinolytic enzymes, pectin lyase is the most important in depolymerization of pectin, since it cleaves internal glycosidic bonds of highly methylated pectins. The chain is Probable pectin lyase E (pelE) from Aspergillus niger.